Reading from the N-terminus, the 139-residue chain is Small ribosomal subunit protein uS11 (139 aa).

The disordered stretch occupies residues 118–139; that stretch reads EDVTPIPHDGTRPKGGRRGRRV.

This sequence belongs to the universal ribosomal protein uS11 family. As to quaternary structure, part of the 30S ribosomal subunit.

Functionally, located on the platform of the 30S subunit. The sequence is that of Small ribosomal subunit protein uS11 from Thermococcus sibiricus (strain DSM 12597 / MM 739).